A 226-amino-acid polypeptide reads, in one-letter code: ATP synthase F(0) complex subunit a (226 aa).

The next 6 membrane-spanning stretches (helical) occupy residues 6-26 (FASFITPVILGLPLVTLIVLF), 68-88 (WALMLMSLILFIGSTNLLGLL), 97-117 (QLSMNLGMAIPLWAGAVITGF), 138-158 (IPMLVIIETISLFIQPVALAV), 164-184 (ITAGHLLIHLIGGATLALMSI), and 189-209 (ALITFTILILLTILEFAVAMI).

The protein belongs to the ATPase A chain family. In terms of assembly, component of the ATP synthase complex composed at least of ATP5F1A/subunit alpha, ATP5F1B/subunit beta, ATP5MC1/subunit c (homooctomer), MT-ATP6/subunit a, MT-ATP8/subunit 8, ATP5ME/subunit e, ATP5MF/subunit f, ATP5MG/subunit g, ATP5MK/subunit k, ATP5MJ/subunit j, ATP5F1C/subunit gamma, ATP5F1D/subunit delta, ATP5F1E/subunit epsilon, ATP5PF/subunit F6, ATP5PB/subunit b, ATP5PD/subunit d, ATP5PO/subunit OSCP. ATP synthase complex consists of a soluble F(1) head domain (subunits alpha(3) and beta(3)) - the catalytic core - and a membrane F(0) domain - the membrane proton channel (subunits c, a, 8, e, f, g, k and j). These two domains are linked by a central stalk (subunits gamma, delta, and epsilon) rotating inside the F1 region and a stationary peripheral stalk (subunits F6, b, d, and OSCP). Interacts with DNAJC30; interaction is direct.

The protein resides in the mitochondrion inner membrane. It carries out the reaction H(+)(in) = H(+)(out). Functionally, subunit a, of the mitochondrial membrane ATP synthase complex (F(1)F(0) ATP synthase or Complex V) that produces ATP from ADP in the presence of a proton gradient across the membrane which is generated by electron transport complexes of the respiratory chain. ATP synthase complex consist of a soluble F(1) head domain - the catalytic core - and a membrane F(1) domain - the membrane proton channel. These two domains are linked by a central stalk rotating inside the F(1) region and a stationary peripheral stalk. During catalysis, ATP synthesis in the catalytic domain of F(1) is coupled via a rotary mechanism of the central stalk subunits to proton translocation. With the subunit c (ATP5MC1), forms the proton-conducting channel in the F(0) domain, that contains two crucial half-channels (inlet and outlet) that facilitate proton movement from the mitochondrial intermembrane space (IMS) into the matrix. Protons are taken up via the inlet half-channel and released through the outlet half-channel, following a Grotthuss mechanism. This chain is ATP synthase F(0) complex subunit a, found in Bos indicus (Zebu).